The sequence spans 194 residues: uncharacterized protein (194 aa).

Positions 25–156 (PSWACRRGGP…ESPLGTLPCS (132 aa)) are disordered. Positions 43 to 57 (GPSTVPVTPTAGSCQ) are enriched in polar residues. A compositionally biased stretch (low complexity) spans 104-113 (SSSPGPSFHL).

This is an uncharacterized protein from Homo sapiens (Human).